The chain runs to 111 residues: Ribonuclease P protein component (111 aa).

This sequence belongs to the RnpA family. As to quaternary structure, consists of a catalytic RNA component (M1 or rnpB) and a protein subunit.

The enzyme catalyses Endonucleolytic cleavage of RNA, removing 5'-extranucleotides from tRNA precursor.. RNaseP catalyzes the removal of the 5'-leader sequence from pre-tRNA to produce the mature 5'-terminus. It can also cleave other RNA substrates such as 4.5S RNA. The protein component plays an auxiliary but essential role in vivo by binding to the 5'-leader sequence and broadening the substrate specificity of the ribozyme. The protein is Ribonuclease P protein component of Clostridium botulinum (strain Okra / Type B1).